Reading from the N-terminus, the 439-residue chain is Xaa-Pro dipeptidase (439 aa).

5 residues coordinate Mn(2+): aspartate 244, aspartate 255, histidine 335, glutamate 380, and glutamate 419.

The protein belongs to the peptidase M24B family. Bacterial-type prolidase subfamily. Requires Mn(2+) as cofactor.

The catalysed reaction is Xaa-L-Pro dipeptide + H2O = an L-alpha-amino acid + L-proline. In terms of biological role, splits dipeptides with a prolyl residue in the C-terminal position. This chain is Xaa-Pro dipeptidase, found in Shewanella sp. (strain MR-7).